The chain runs to 259 residues: O-antigen export system permease protein RfbA (259 aa).

The next 6 membrane-spanning stretches (helical) occupy residues 33–53, 73–95, 111–131, 142–162, 176–196, and 228–248; these read FGYL…YFIF, FPWQ…NAQI, VMME…FLFV, WGIP…SIIF, VSLG…SDMI, and EYIS…LAIF. An ABC transmembrane type-2 domain is found at 33-251; it reads FGYLWSIANP…IVGLAIFNKL (219 aa).

The protein belongs to the ABC-2 integral membrane protein family.

Its subcellular location is the cell inner membrane. Functionally, may form an ATP-driven O-antigen export apparatus, in association with RfbB. The chain is O-antigen export system permease protein RfbA (rfbA) from Klebsiella pneumoniae.